The chain runs to 438 residues: Enolase (438 aa).

A (2R)-2-phosphoglycerate-binding site is contributed by glutamine 174. The active-site Proton donor is the glutamate 216. Residues aspartate 253, glutamate 297, and aspartate 324 each contribute to the Mg(2+) site. Residues lysine 349, arginine 378, serine 379, and lysine 400 each coordinate (2R)-2-phosphoglycerate. Lysine 349 serves as the catalytic Proton acceptor.

This sequence belongs to the enolase family. Component of the RNA degradosome, a multiprotein complex involved in RNA processing and mRNA degradation. The cofactor is Mg(2+).

It is found in the cytoplasm. It localises to the secreted. The protein resides in the cell surface. It carries out the reaction (2R)-2-phosphoglycerate = phosphoenolpyruvate + H2O. It functions in the pathway carbohydrate degradation; glycolysis; pyruvate from D-glyceraldehyde 3-phosphate: step 4/5. Functionally, catalyzes the reversible conversion of 2-phosphoglycerate (2-PG) into phosphoenolpyruvate (PEP). It is essential for the degradation of carbohydrates via glycolysis. The protein is Enolase of Psychrobacter arcticus (strain DSM 17307 / VKM B-2377 / 273-4).